Consider the following 334-residue polypeptide: MPRPSSPRPDAERKSASPLHPRNRHLGRYDFPGLIAGNPELERFVIVNPYGKPSIDFADPLAVKAFNRALLQQFYDVREWNIPEGYLCPPIPGRADYLHYLADLLGASHDGVIPRGTGLRALDVGTGANCIYPLLGHHEYGWRFVGADIDPQSLASAAAILAANPRFAAAIELRRQPDRRHIFEGLVDSAERFDMTLCNPPFHASLDEATRGSRRKWKNLGKLDPGRTLPLLNFGGQGAELHCEGGEAAFLASMAGESRAFATQVFWFTTLVSKASNLPNLQERLKTLGASDIRVVDMAQGQKQSRFVAWTYLDKKQRRAWRRERWSAAVPLGE.

Positions 1-25 are disordered; it reads MPRPSSPRPDAERKSASPLHPRNRH.

The protein belongs to the methyltransferase superfamily. METTL16/RlmF family.

The protein localises to the cytoplasm. It carries out the reaction adenosine(1618) in 23S rRNA + S-adenosyl-L-methionine = N(6)-methyladenosine(1618) in 23S rRNA + S-adenosyl-L-homocysteine + H(+). Its function is as follows. Specifically methylates the adenine in position 1618 of 23S rRNA. The chain is Ribosomal RNA large subunit methyltransferase F from Pseudomonas paraeruginosa (strain DSM 24068 / PA7) (Pseudomonas aeruginosa (strain PA7)).